A 423-amino-acid chain; its full sequence is UPF0229 protein PSPPH_0628 (423 aa).

The tract at residues 65–110 (HHGRGGKQTVVHPGNKEFTTGEHIARPQGGGGGKGPGKAGNSGEGM) is disordered. Gly residues predominate over residues 92–107 (QGGGGGKGPGKAGNSG).

Belongs to the UPF0229 family.

This is UPF0229 protein PSPPH_0628 from Pseudomonas savastanoi pv. phaseolicola (strain 1448A / Race 6) (Pseudomonas syringae pv. phaseolicola (strain 1448A / Race 6)).